Consider the following 171-residue polypeptide: S-ribosylhomocysteine lyase (171 aa).

His-54, His-58, and Cys-128 together coordinate Fe cation.

This sequence belongs to the LuxS family. As to quaternary structure, homodimer. Fe cation serves as cofactor.

The catalysed reaction is S-(5-deoxy-D-ribos-5-yl)-L-homocysteine = (S)-4,5-dihydroxypentane-2,3-dione + L-homocysteine. Its function is as follows. Involved in the synthesis of autoinducer 2 (AI-2) which is secreted by bacteria and is used to communicate both the cell density and the metabolic potential of the environment. The regulation of gene expression in response to changes in cell density is called quorum sensing. Catalyzes the transformation of S-ribosylhomocysteine (RHC) to homocysteine (HC) and 4,5-dihydroxy-2,3-pentadione (DPD). The protein is S-ribosylhomocysteine lyase of Escherichia coli O81 (strain ED1a).